A 475-amino-acid chain; its full sequence is uncharacterized protein (475 aa).

The chain crosses the membrane as a helical span at residues 19–39 (LVSAILILSILIWLIITIFFA).

Its subcellular location is the membrane. This is an uncharacterized protein from Mycoplasma pneumoniae (strain ATCC 29342 / M129 / Subtype 1) (Mycoplasmoides pneumoniae).